Reading from the N-terminus, the 181-residue chain is Inner membrane-spanning protein YciB (181 aa).

5 helical membrane-spanning segments follow: residues 24–44, 49–69, 81–101, 119–139, and 149–169; these read SATA…WLRH, NMLW…LILQ, LYWL…KNLI, LNIS…YVAY, and FKLF…ALLL.

The protein belongs to the YciB family.

The protein resides in the cell inner membrane. Functionally, plays a role in cell envelope biogenesis, maintenance of cell envelope integrity and membrane homeostasis. The polypeptide is Inner membrane-spanning protein YciB (Nitrosomonas eutropha (strain DSM 101675 / C91 / Nm57)).